The sequence spans 871 residues: Translation initiation factor IF-2 (871 aa).

Disordered regions lie at residues 60-101 (KKNI…QEVK) and 184-203 (ESLK…KKES). Residues 61-72 (KNIKTPTAKKPK) are compositionally biased toward basic residues. Basic and acidic residues predominate over residues 73-101 (KENIKEQEKLNESEKKEPKKEEKLKQEVK). Residues 370–537 (TRAPVITIMG…IVLLQADILE (168 aa)) form the tr-type G domain. Positions 379 to 386 (GHVDHGKT) are G1. 379–386 (GHVDHGKT) is a GTP binding site. Positions 404-408 (GITQH) are G2. The segment at 425 to 428 (DTPG) is G3. GTP contacts are provided by residues 425-429 (DTPGH) and 479-482 (NKMD). Positions 479-482 (NKMD) are G4. Residues 515–517 (SAK) are G5.

The protein belongs to the TRAFAC class translation factor GTPase superfamily. Classic translation factor GTPase family. IF-2 subfamily.

The protein localises to the cytoplasm. Its function is as follows. One of the essential components for the initiation of protein synthesis. Protects formylmethionyl-tRNA from spontaneous hydrolysis and promotes its binding to the 30S ribosomal subunits. Also involved in the hydrolysis of GTP during the formation of the 70S ribosomal complex. This is Translation initiation factor IF-2 from Campylobacter jejuni subsp. jejuni serotype O:23/36 (strain 81-176).